The primary structure comprises 186 residues: Elongation factor P (186 aa).

Belongs to the elongation factor P family.

The protein resides in the cytoplasm. Its pathway is protein biosynthesis; polypeptide chain elongation. In terms of biological role, involved in peptide bond synthesis. Stimulates efficient translation and peptide-bond synthesis on native or reconstituted 70S ribosomes in vitro. Probably functions indirectly by altering the affinity of the ribosome for aminoacyl-tRNA, thus increasing their reactivity as acceptors for peptidyl transferase. This Thiobacillus denitrificans (strain ATCC 25259 / T1) protein is Elongation factor P.